A 441-amino-acid polypeptide reads, in one-letter code: FAM10 family protein At4g22670 (441 aa).

Positions 41 to 114 are disordered; the sequence is KIPTGVHEED…PQKMGDSSVE (74 aa). The span at 46–55 shows a compositional bias: basic and acidic residues; the sequence is VHEEDKDTKP. 2 stretches are compositionally biased toward acidic residues: residues 61 to 71 and 78 to 102; these read EESDDDMDETE and EEEE…EPDN. Phosphoserine is present on residues S63 and S89. TPR repeat units follow at residues 121–156, 158–190, and 191–224; these read EAAQ…NPTS, IMYG…NPDS, and AKGY…DYDE. Residues 236–285 are a coiled coil; that stretch reads NAHKLEEHRRKYDRLRKEREDKKAERDRLRRRAEAQAAYDKAKKEEQSSS. The span at 244–282 shows a compositional bias: basic and acidic residues; the sequence is RRKYDRLRKEREDKKAERDRLRRRAEAQAAYDKAKKEEQ. The disordered stretch occupies residues 244–314; it reads RRKYDRLRKE…MPGGFPGGMG (71 aa). Gly residues predominate over residues 289–314; sequence SGGGFPGGMPGGFPGGMPGGFPGGMG. One can recognise an STI1 domain in the interval 391 to 430; the sequence is DPELMTAFSDPEVMAALQDVMKNPANLAKHQANPKVAPVI.

It belongs to the FAM10 family.

In Arabidopsis thaliana (Mouse-ear cress), this protein is FAM10 family protein At4g22670.